The primary structure comprises 414 residues: GA-binding protein subunit beta-2 (414 aa).

ANK repeat units follow at residues 5 to 34 (DLGK…PFTT), 37 to 66 (LGTS…SRDA), 70 to 99 (VDRT…DVNA), 103 to 132 (LQMT…DVYA), and 136 to 166 (FDKS…QVNT). S218 carries the post-translational modification Phosphoserine. A coiled-coil region spans residues 310 to 362 (EEMKEGSERELLQQQLQEANRRAQEYRHQLLKKEQEAEQYRLRLEAMAQQQTN).

As to quaternary structure, heterotetramer of two alpha and two beta subunits. The C-terminal is necessary for the formation of a heterotetrameric GABP-alpha-2/beta-2 complex, and also facilitates homotypic dimerization. Interacts with ADGRB2. In terms of tissue distribution, high levels in thymus, spleen, kidney and intestine.

The protein resides in the nucleus. Functionally, transcription factor capable of interacting with purine rich repeats (GA repeats). Must associate with GABP-alpha to bind DNA. In Mus musculus (Mouse), this protein is GA-binding protein subunit beta-2 (Gabpb2).